The chain runs to 185 residues: Ribosome-recycling factor (185 aa).

Belongs to the RRF family.

The protein localises to the cytoplasm. Its function is as follows. Responsible for the release of ribosomes from messenger RNA at the termination of protein biosynthesis. May increase the efficiency of translation by recycling ribosomes from one round of translation to another. In Beutenbergia cavernae (strain ATCC BAA-8 / DSM 12333 / CCUG 43141 / JCM 11478 / NBRC 16432 / NCIMB 13614 / HKI 0122), this protein is Ribosome-recycling factor.